The chain runs to 610 residues: Solute carrier family 2, facilitated glucose transporter member 12 (610 aa).

Over 1–49 (MDAPEESIRMTSDPQSKIYVQNPDTHIHLEQGPSAKSGNGRALVLCSVS) the chain is Cytoplasmic. A helical transmembrane segment spans residues 50–70 (VACLSGLLMGYEMSLISGALL). At 71 to 84 (QLRDVLTLSCPEQE) the chain is on the extracellular side. Residues 85 to 105 (QVVGSLLLGAFLLSLGGGTIL) traverse the membrane as a helical segment. Topologically, residues 106 to 118 (DHYGRRFTIILTA) are cytoplasmic. Residues 119-139 (LLCVLGTLLSVCVVSFWALVV) traverse the membrane as a helical segment. The Extracellular portion of the chain corresponds to 140–141 (GR). Residues 142–162 (MLVGMSVALSGTASCLYAAEV) form a helical membrane-spanning segment. Topologically, residues 163–176 (APAAWRGRCVCVYE) are cytoplasmic. The chain crosses the membrane as a helical span at residues 177-197 (LMVVLGMLLGFGLSWAFAGVP). The Extracellular segment spans residues 198–201 (DGWR). Residues 202 to 222 (FTFGGALLPALLQAGVMPLLP) form a helical membrane-spanning segment. At 223–286 (DSPRFLLAQQ…FQSRDNMLQR (64 aa)) the chain is on the cytoplasmic side. A helical transmembrane segment spans residues 287–307 (LLVGAALVFLQQATGQPNILA). The Extracellular segment spans residues 308-325 (YASTVLSSVGFHGNEAAT). Residues 326-346 (LASTGFGVVKVGGTIPAIFLV) traverse the membrane as a helical segment. The Cytoplasmic segment spans residues 347-353 (DKVGPKA). Residues 354-374 (LLCVGVVVMMLSTATLGAITM) form a helical membrane-spanning segment. Over 375–475 (QSRTHVSSLC…LHEVSPSLKW (101 aa)) the chain is Extracellular. N392, N429, and N438 each carry an N-linked (GlcNAc...) asparagine glycan. A helical membrane pass occupies residues 476-496 (ISLVSLLVYVAGFSISLGPMV). Residues 497–511 (HVVLSAIFPTGIRGK) lie on the Cytoplasmic side of the membrane. A helical membrane pass occupies residues 512–532 (AVSVISAFNWATNLLISMTFL). Residues 533–542 (TLTERIGLPT) lie on the Extracellular side of the membrane. A helical membrane pass occupies residues 543–563 (VIFSYSAMSFLLVVFVIVFVP). At 564–610 (ETKGRSLEQISKELAMKNHLRGTLLCHRRKHKATAQPSQEEKALATV) the chain is on the cytoplasmic side.

The protein belongs to the major facilitator superfamily. Sugar transporter (TC 2.A.1.1) family. Glucose transporter subfamily. In terms of tissue distribution, expressed in the main insulin-sensitive tissues, such as cardiac muscle, skeletal muscle and adipose tissue.

It localises to the cell membrane. It is found in the endomembrane system. Its subcellular location is the cytoplasm. The protein localises to the perinuclear region. It carries out the reaction D-glucose(out) = D-glucose(in). Functionally, insulin-regulated facilitative glucose transporter. The polypeptide is Solute carrier family 2, facilitated glucose transporter member 12 (Danio rerio (Zebrafish)).